We begin with the raw amino-acid sequence, 554 residues long: Heterochromatin protein 1-binding protein 3 (554 aa).

At A2 the chain carries N-acetylalanine. At S6 the chain carries Phosphoserine. Disordered stretches follow at residues 30–136 and 142–161; these read LGEK…KTIP and SASQ…SPRP. The residue at position 51 (T51) is a Phosphothreonine. A compositionally biased stretch (acidic residues) spans 60-71; that stretch reads GEEEKPEPDGSS. K64 participates in a covalent cross-link: Glycyl lysine isopeptide (Lys-Gly) (interchain with G-Cter in SUMO2). Phosphothreonine occurs at positions 72 and 85. A compositionally biased stretch (polar residues) spans 72–93; that stretch reads EESISTVEEQENETPPATSSEA. Basic and acidic residues predominate over residues 94–129; sequence EQPKGEPESGEKEENNNKSAEEPKKDEKDQSKEKEK. K97 participates in a covalent cross-link: Glycyl lysine isopeptide (Lys-Gly) (interchain with G-Cter in SUMO2). Residues 142-156 are compositionally biased toward polar residues; that stretch reads SASQLARAQRQTPMA. Phosphoserine is present on residues S144, S157, and S158. An H15 1 domain is found at 159 to 234; the sequence is PRPKMDAILT…GASGSFVVVQ (76 aa). K192 bears the N6-acetyllysine mark. A disordered region spans residues 229–254; it reads SFVVVQKSKPPQKSKNRKKGSALDPE. Residues 238 to 248 show a composition bias toward basic residues; it reads PPQKSKNRKKG. The residue at position 249 (S249) is a Phosphoserine. Residues 255–259 carry the PxVxL motif motif; the sequence is PQVKL. 2 H15 domains span residues 255 to 330 and 337 to 413; these read PQVK…QLKK and LGGS…QLSF. K258 is covalently cross-linked (Glycyl lysine isopeptide (Lys-Gly) (interchain with G-Cter in SUMO2)). A disordered region spans residues 420 to 554; sequence GVLFPKKESG…AMKKSFKTKK (135 aa). Acidic residues predominate over residues 430–451; that stretch reads GSDDEDEDDDDDESSEDSEDEE. 3 positions are modified to phosphoserine: S443, S444, and S447. A compositionally biased stretch (polar residues) spans 464–475; the sequence is AKSQGKTASMKQ. Basic residues-rich tracts occupy residues 490 to 511 and 544 to 554; these read GKVR…RKAR and SAMKKSFKTKK.

In terms of assembly, interacts (via PxVxL motif) with CBX5 (via Trp-174).

It localises to the nucleus. The protein resides in the chromosome. Functionally, component of heterochromatin that maintains heterochromatin integrity during G1/S progression and regulates the duration of G1 phase to critically influence cell proliferative capacity. May play a role in hypoxia-induced oncogenesis. The protein is Heterochromatin protein 1-binding protein 3 (Hp1bp3) of Mus musculus (Mouse).